A 55-amino-acid chain; its full sequence is Eclosion hormone (55 aa).

This sequence belongs to the insect eclosion hormone family.

The protein localises to the secreted. Its function is as follows. Neuropeptide that triggers the performance of ecdysis behaviors at the end of a molt. It triggers adult behavior patterns: larval, pupal and adult ecdysis, and plasticization during the molt. The polypeptide is Eclosion hormone (Romalea microptera (Eastern lubber grasshopper)).